The primary structure comprises 620 residues: Protein regulator of cytokinesis 1 (620 aa).

A required for the interaction with KIF4A region spans residues 1–303 (MRRSEVLAEE…IEAIRVELVQ (303 aa)). The interval 1–341 (MRRSEVLAEE…QLHDAEIVRL (341 aa)) is dimerization. 3 coiled-coil regions span residues 96–133 (ILQLEKDLRTQVELMRKQKKERKQELKLLQEQDQELCE), 211–304 (SLEN…LVQY), and 383–463 (GNLL…TEML). Positions 342–466 (KNYYEVHKEL…QTETEMLYGS (125 aa)) are spectrin-fold. Basic and acidic residues predominate over residues 446 to 459 (AKQERQLKNKKQTE). A disordered region spans residues 446 to 488 (AKQERQLKNKKQTETEMLYGSAPRTPSKRRGLAPNTPGKARKL). The unstructured, Arg/Lys rich stretch occupies residues 467–620 (APRTPSKRRG…GILNSTNIQS (154 aa)). Phosphothreonine; by CDK1 occurs at positions 470 and 481. Phosphoserine is present on residues S513, R541, and S571. Positions 517–545 (RLPPSGSKPVAASTCSGKKTPRTGRHGAN) are disordered. Position 578 is a phosphothreonine (T578). The segment at 600–620 (LSKASKSDATSGILNSTNIQS) is disordered. The segment covering 606–620 (SDATSGILNSTNIQS) has biased composition (polar residues). At T616 the chain carries Phosphothreonine; by PLK1.

Belongs to the MAP65/ASE1 family. In terms of assembly, homodimer. Interacts with the C-terminal Rho-GAP domain and the basic region of RACGAP1. The interaction with RACGAP1 inhibits its GAP activity towards CDC42 in vitro, which may be required for maintaining normal spindle morphology. Interacts (via N-terminus) with the C-terminus of CENPE (via C-terminus); the interaction occurs during late mitosis. Interacts (via N-terminus) with KIF4A (via C-terminus); the interaction is required for the progression of mitosis. Interacts (via N-terminus) with KIF23 (via C-terminus); the interaction occurs during late mitosis. Interacts with KIF14 and KIF20A. Interacts with PLK1. Interacts with KIF20B. Interacts with CCDC66. Post-translationally, phosphorylation by CDK1 in early mitosis holds PRC1 in an inactive monomeric state, during the metaphase to anaphase transition, PRC1 is dephosphorylated, promoting interaction with KIF4A, which then translocates PRC1 along mitotic spindles to the plus ends of antiparallel interdigitating microtubules. Dephosphorylation also promotes MT-bundling activity by allowing dimerization. Phosphorylation by CDK1 prevents PLK1-binding: upon degradation of CDK1 at anaphase and dephosphorylation, it is then phosphorylated by PLK1, leading to cytokinesis. In terms of tissue distribution, overexpressed in bladder cancer cells.

The protein localises to the nucleus. It localises to the cytoplasm. It is found in the cytoskeleton. Its subcellular location is the spindle pole. The protein resides in the midbody. The protein localises to the chromosome. Key regulator of cytokinesis that cross-links antiparrallel microtubules at an average distance of 35 nM. Essential for controlling the spatiotemporal formation of the midzone and successful cytokinesis. Required for KIF14 localization to the central spindle and midbody. Required to recruit PLK1 to the spindle. Stimulates PLK1 phosphorylation of RACGAP1 to allow recruitment of ECT2 to the central spindle. Acts as an oncogene for promoting bladder cancer cells proliferation, apoptosis inhibition and carcinogenic progression. The protein is Protein regulator of cytokinesis 1 of Homo sapiens (Human).